Here is a 492-residue protein sequence, read N- to C-terminus: Bifunctional protein GlmU (492 aa).

Residues 1–241 form a pyrophosphorylase region; sequence MTFRGDTAVL…NALVAGVNNR (241 aa). Residues 12–15, lysine 26, glutamine 83, 88–89, 112–114, glycine 151, glutamate 166, asparagine 181, and asparagine 239 contribute to the UDP-N-acetyl-alpha-D-glucosamine site; these read LAAG, GT, and SGD. A Mg(2+)-binding site is contributed by aspartate 114. Residue asparagine 239 coordinates Mg(2+). Positions 242-262 are linker; sequence VQLAELSAELNRRIVATHQVA. Residues 263–492 are N-acetyltransferase; that stretch reads GVTIIDPATT…KQSQQKSEPD (230 aa). Positions 344 and 362 each coordinate UDP-N-acetyl-alpha-D-glucosamine. The active-site Proton acceptor is the histidine 374. UDP-N-acetyl-alpha-D-glucosamine contacts are provided by tyrosine 377 and asparagine 388. Residues alanine 391, 397–398, serine 416, and alanine 434 contribute to the acetyl-CoA site; that span reads NY. Positions 461-492 are disordered; the sequence is VQRKRPGSAAAQAAEKASTRTGKQSQQKSEPD. The span at 479 to 492 shows a compositional bias: polar residues; the sequence is TRTGKQSQQKSEPD.

This sequence in the N-terminal section; belongs to the N-acetylglucosamine-1-phosphate uridyltransferase family. In the C-terminal section; belongs to the transferase hexapeptide repeat family. Homotrimer. Requires Mg(2+) as cofactor.

The protein localises to the cytoplasm. The enzyme catalyses alpha-D-glucosamine 1-phosphate + acetyl-CoA = N-acetyl-alpha-D-glucosamine 1-phosphate + CoA + H(+). The catalysed reaction is N-acetyl-alpha-D-glucosamine 1-phosphate + UTP + H(+) = UDP-N-acetyl-alpha-D-glucosamine + diphosphate. Its pathway is nucleotide-sugar biosynthesis; UDP-N-acetyl-alpha-D-glucosamine biosynthesis; N-acetyl-alpha-D-glucosamine 1-phosphate from alpha-D-glucosamine 6-phosphate (route II): step 2/2. It functions in the pathway nucleotide-sugar biosynthesis; UDP-N-acetyl-alpha-D-glucosamine biosynthesis; UDP-N-acetyl-alpha-D-glucosamine from N-acetyl-alpha-D-glucosamine 1-phosphate: step 1/1. It participates in bacterial outer membrane biogenesis; LPS lipid A biosynthesis. Functionally, catalyzes the last two sequential reactions in the de novo biosynthetic pathway for UDP-N-acetylglucosamine (UDP-GlcNAc). The C-terminal domain catalyzes the transfer of acetyl group from acetyl coenzyme A to glucosamine-1-phosphate (GlcN-1-P) to produce N-acetylglucosamine-1-phosphate (GlcNAc-1-P), which is converted into UDP-GlcNAc by the transfer of uridine 5-monophosphate (from uridine 5-triphosphate), a reaction catalyzed by the N-terminal domain. This chain is Bifunctional protein GlmU, found in Mycobacterium leprae (strain Br4923).